Consider the following 417-residue polypeptide: Actin-related protein 10 (417 aa).

Belongs to the actin family. As to quaternary structure, subunit of dynactin, a multiprotein complex part of a tripartite complex with dynein and a adapter, such as BICDL1, BICD2 or HOOK3. The dynactin complex is built around ACTR1A/ACTB filament and consists of an actin-related filament composed of a shoulder domain, a pointed end and a barbed end. Its length is defined by its flexible shoulder domain. The soulder is composed of 2 DCTN1 subunits, 4 DCTN2 and 2 DCTN3. The 4 DCNT2 (via N-terminus) bind the ACTR1A filament and act as molecular rulers to determine the length. The pointed end is important for binding dynein-dynactin cargo adapters. Consists of 4 subunits: ACTR10, DCNT4, DCTN5 and DCTN6. The barbed end is composed of a CAPZA1:CAPZB heterodimers, which binds ACTR1A/ACTB filament and dynactin and stabilizes dynactin.

The protein resides in the cytoplasm. It is found in the cytoskeleton. Functionally, part of the dynactin complex that activates the molecular motor dynein for ultra-processive transport along microtubules. This is Actin-related protein 10 (ACTR10) from Homo sapiens (Human).